The primary structure comprises 225 residues: Sodium-dependent neutral amino acid transporter SLC6A17 (225 aa).

Helical transmembrane passes span 1–8 (NVWRFPYL), 16–35 (AYLVPYLVLLIIIGIPLFFL), and 60–80 (GIGFSSCIVCLFVGLYYNVII). The Extracellular portion of the chain corresponds to 81 to 143 (GWSIFYFFKS…NSISESGGLN (63 aa)). Asparagine 105 is a glycosylation site (N-linked (GlcNAc...) asparagine). Transmembrane regions (helical) follow at residues 144 to 162 (WKMTLCLLVAWRIVGMAVV), 171 to 188 (VMYFSSLFPYVVLACFLV), and 224 to 225 (IF).

Belongs to the sodium:neurotransmitter symporter (SNF) (TC 2.A.22) family.

It is found in the cytoplasmic vesicle. It localises to the secretory vesicle. Its subcellular location is the synaptic vesicle membrane. The protein localises to the postsynapse. The protein resides in the presynapse. It catalyses the reaction L-proline(in) + Na(+)(in) = L-proline(out) + Na(+)(out). The catalysed reaction is L-leucine(in) + Na(+)(in) = L-leucine(out) + Na(+)(out). It carries out the reaction glycine(in) + Na(+)(in) = glycine(out) + Na(+)(out). The enzyme catalyses L-alanine(in) + Na(+)(in) = L-alanine(out) + Na(+)(out). It catalyses the reaction L-glutamine(in) + Na(+)(in) = L-glutamine(out) + Na(+)(out). Its function is as follows. Synaptic vesicle transporter with apparent selectivity for neutral amino acids. The transport is sodium-coupled but chloride-independent, likely driven by the proton electrochemical gradient generated by vacuolar H(+)-ATPase in an overall electrogenic mechanism. May contribute to the synaptic uptake of neurotransmitter precursors in a process coupled in part to vesicle exocytosis. The polypeptide is Sodium-dependent neutral amino acid transporter SLC6A17 (Bos taurus (Bovine)).